Consider the following 859-residue polypeptide: MITQLTRKIFGTKNDKLVKKYRQRAQKINELEAKYQVMSDEALKSAFTSLKESVQKGEKSLDDVLYDSFAITREASKRVLGMRHFDVQLVGGMVLHEGRIAEMKTGEGKTLVATLAVALNAMKGEGVHVVTVNDYLAKRDATEMGVLYSFLGYSVGVITGDLYGDSERLEQYSSDVVYGTNNEFGFDYLRDNMKYSLEEKVQKSHAFAIVDEVDSILIDEARTPLIISGPANRKLDNYKIANSVALSLQKEKHFTVDEKNRVILLTEEGIREAEKGFGVDNLYSIENAILSHHLDQALKANHLFAIDKDYVINNGEVVIVDEFTGRLSEGRRFSEGLHQALEAKEGVEIKEESQTLADITFQNYFRLYKKLAGMTGTAQTEASEFLQIYKLEVISIPTNVTVMRKDLNDLIYKTEREKFNAVIQKIKELNQKGQPVLVGTASIEKSELLHSLLQKERIPHTVLNAKQHAKEAEIIKDAGKKGAVTIATNMAGRGVDIKIDDEIRSLGGLYIIGTERHESRRIDNQLRGRSGRQGDPGASQFYLSLEDNLLRIFGSDKIKNIMDKLGLAEGEHIESGLVTRSVENAQKKVESMHFESRKHLLEYDDVANEQRKAVYKFRNELLDKSHDISHRIEDNRRDSLLNLLSKADILEGVEKEEYDLDRLLALFTEEYNTPISKELLEGKEYEALLLTLESHLKESYETKMSLVDENQKHDIERLIYLQVLDNAWREHLYLMDNLKTGIGLRGYNQKDPLVEYKKESYNLFIELIENIKFESMKALHSIQLRTKEEQEERQRAQEAAMQRLLSEMNAEANANLQFSHQPQSEVKVSRNDPCPCGSGKKYKNCCGQSGPKKGLLAQA.

ATP is bound by residues Gln88, Gly106–Thr110, and Asp496. The disordered stretch occupies residues Phe818 to Ser838. Zn(2+)-binding residues include Cys834, Cys836, Cys845, and Cys846.

This sequence belongs to the SecA family. Monomer and homodimer. Part of the essential Sec protein translocation apparatus which comprises SecA, SecYEG and auxiliary proteins SecDF-YajC and YidC. Zn(2+) serves as cofactor.

It localises to the cell inner membrane. The protein resides in the cytoplasm. It carries out the reaction ATP + H2O + cellular proteinSide 1 = ADP + phosphate + cellular proteinSide 2.. Functionally, part of the Sec protein translocase complex. Interacts with the SecYEG preprotein conducting channel. Has a central role in coupling the hydrolysis of ATP to the transfer of proteins into and across the cell membrane, serving as an ATP-driven molecular motor driving the stepwise translocation of polypeptide chains across the membrane. This Wolinella succinogenes (strain ATCC 29543 / DSM 1740 / CCUG 13145 / JCM 31913 / LMG 7466 / NCTC 11488 / FDC 602W) (Vibrio succinogenes) protein is Protein translocase subunit SecA.